The chain runs to 311 residues: F-box protein At3g18320 (311 aa).

The F-box domain maps to 1–46; the sequence is MTLPELPKDLVEEILCFVPATSLKRLRSTCKGWNRLFKDDKRFARK.

The polypeptide is F-box protein At3g18320 (Arabidopsis thaliana (Mouse-ear cress)).